The sequence spans 512 residues: Glutathione-binding protein GsiB (512 aa).

Residues 1 to 26 (MARAVHRSGLVALGIATALMASCAFA) form the signal peptide.

The protein belongs to the bacterial solute-binding protein 5 family. In terms of assembly, the complex is composed of two ATP-binding proteins (GsiA), two transmembrane proteins (GsiC and GsiD) and a solute-binding protein (GsiB).

It localises to the periplasm. In terms of biological role, part of the ABC transporter complex GsiABCD involved in glutathione import. Binds glutathione. The chain is Glutathione-binding protein GsiB from Shigella flexneri.